A 193-amino-acid chain; its full sequence is Putative manganese efflux pump MntP (193 aa).

A run of 6 helical transmembrane segments spans residues 3-23 (PLSIVLLGFAMSTDAFAAAIG), 37-57 (VRAGLVFGCIEAITPVIGWML), 66-86 (AAFDHWIAFGLLGALGAHMIV), 109-131 (LALAATGFATSIDAMAVGVSLAF), 146-166 (CTLSMVTAGVMLGRALGALIG), and 171-191 (ILGGVILILIGSTILYEHLSG).

It belongs to the MntP (TC 9.B.29) family.

Its subcellular location is the cell inner membrane. Functionally, probably functions as a manganese efflux pump. This chain is Putative manganese efflux pump MntP, found in Xanthomonas campestris pv. campestris (strain 8004).